We begin with the raw amino-acid sequence, 384 residues long: MKIHEYQAKAILAQYKVPVPRGHVAYTEADAETAAKTLGGSVVVKAQIHAGGRGKGGGVKVAKDAAEALELAKKILGMTLVTHQTGPEGRLVQRLLIEETLPIERELYLGIVLDRVQGKPVFMASSAGGMDIEEVAAKTPELILKETLEYPGLSPYQARKLAFGIGIPAASVNAAAAAMTALSKAYWAMDASLAEINPFILTTDGKVYALDAKITFDDNALYRHKELVELRDLNEEDPLEVEASKHGLNYIKLDGTVGCMVNGAGLAMATMDIIKFAGGSPANFLDVGGGANAEQVKNAFRILLSDHSVKAVLINIFGGILRCDTLATGVVAAARDLNIQVPIVVRMEGTNVEAGRQILLESGFNFTVGADMWDAAQKVVKLAA.

The ATP-grasp domain maps to 9-242; that stretch reads KAILAQYKVP…LNEEDPLEVE (234 aa). ATP-binding positions include Lys45, 52–54, Glu98, Leu101, and Glu106; that span reads GRG. Asn197 and Asp211 together coordinate Mg(2+). Residues Asn262 and 319–321 each bind substrate; that span reads GIL.

The protein belongs to the succinate/malate CoA ligase beta subunit family. In terms of assembly, heterotetramer of two alpha and two beta subunits. The cofactor is Mg(2+).

The catalysed reaction is succinate + ATP + CoA = succinyl-CoA + ADP + phosphate. It carries out the reaction GTP + succinate + CoA = succinyl-CoA + GDP + phosphate. Its pathway is carbohydrate metabolism; tricarboxylic acid cycle; succinate from succinyl-CoA (ligase route): step 1/1. In terms of biological role, succinyl-CoA synthetase functions in the citric acid cycle (TCA), coupling the hydrolysis of succinyl-CoA to the synthesis of either ATP or GTP and thus represents the only step of substrate-level phosphorylation in the TCA. The beta subunit provides nucleotide specificity of the enzyme and binds the substrate succinate, while the binding sites for coenzyme A and phosphate are found in the alpha subunit. The chain is Succinate--CoA ligase [ADP-forming] subunit beta from Solibacter usitatus (strain Ellin6076).